The sequence spans 277 residues: MEMO1 family protein MTH_45 (277 aa).

This sequence belongs to the MEMO1 family.

The chain is MEMO1 family protein MTH_45 from Methanothermobacter thermautotrophicus (strain ATCC 29096 / DSM 1053 / JCM 10044 / NBRC 100330 / Delta H) (Methanobacterium thermoautotrophicum).